The sequence spans 206 residues: Large ribosomal subunit protein uL4 (206 aa).

This sequence belongs to the universal ribosomal protein uL4 family. In terms of assembly, part of the 50S ribosomal subunit.

Functionally, one of the primary rRNA binding proteins, this protein initially binds near the 5'-end of the 23S rRNA. It is important during the early stages of 50S assembly. It makes multiple contacts with different domains of the 23S rRNA in the assembled 50S subunit and ribosome. Its function is as follows. Forms part of the polypeptide exit tunnel. The protein is Large ribosomal subunit protein uL4 of Methylocella silvestris (strain DSM 15510 / CIP 108128 / LMG 27833 / NCIMB 13906 / BL2).